A 620-amino-acid polypeptide reads, in one-letter code: 1-deoxy-D-xylulose-5-phosphate synthase (620 aa).

Residues H80 and 121–123 each bind thiamine diphosphate; that span reads GHS. D152 is a binding site for Mg(2+). Thiamine diphosphate is bound by residues 153-154, N181, Y288, and E370; that span reads GA. N181 is a Mg(2+) binding site.

The protein belongs to the transketolase family. DXPS subfamily. As to quaternary structure, homodimer. Mg(2+) is required as a cofactor. Thiamine diphosphate serves as cofactor.

It carries out the reaction D-glyceraldehyde 3-phosphate + pyruvate + H(+) = 1-deoxy-D-xylulose 5-phosphate + CO2. It functions in the pathway metabolic intermediate biosynthesis; 1-deoxy-D-xylulose 5-phosphate biosynthesis; 1-deoxy-D-xylulose 5-phosphate from D-glyceraldehyde 3-phosphate and pyruvate: step 1/1. Functionally, catalyzes the acyloin condensation reaction between C atoms 2 and 3 of pyruvate and glyceraldehyde 3-phosphate to yield 1-deoxy-D-xylulose-5-phosphate (DXP). This Shigella dysenteriae serotype 1 (strain Sd197) protein is 1-deoxy-D-xylulose-5-phosphate synthase.